Reading from the N-terminus, the 377-residue chain is Chaperone protein DnaJ (377 aa).

The J domain maps to 5 to 69; sequence DYYEVLGISK…QKRAQYDQYG (65 aa). A CR-type zinc finger spans residues 134–216; the sequence is GKDAEIEIPR…CHGKGRVTKT (83 aa). 8 residues coordinate Zn(2+): Cys147, Cys150, Cys164, Cys167, Cys190, Cys193, Cys204, and Cys207. CXXCXGXG motif repeat units lie at residues 147–154, 164–171, 190–197, and 204–211; these read CDTCHGSG, CSHCGGKG, CQYCNGTG, and CPTCHGKG.

It belongs to the DnaJ family. Homodimer. The cofactor is Zn(2+).

The protein resides in the cytoplasm. Its function is as follows. Participates actively in the response to hyperosmotic and heat shock by preventing the aggregation of stress-denatured proteins and by disaggregating proteins, also in an autonomous, DnaK-independent fashion. Unfolded proteins bind initially to DnaJ; upon interaction with the DnaJ-bound protein, DnaK hydrolyzes its bound ATP, resulting in the formation of a stable complex. GrpE releases ADP from DnaK; ATP binding to DnaK triggers the release of the substrate protein, thus completing the reaction cycle. Several rounds of ATP-dependent interactions between DnaJ, DnaK and GrpE are required for fully efficient folding. Also involved, together with DnaK and GrpE, in the DNA replication of plasmids through activation of initiation proteins. This Listeria monocytogenes serotype 1/2a (strain 10403S) protein is Chaperone protein DnaJ.